The primary structure comprises 316 residues: L-lactate dehydrogenase (316 aa).

NAD(+) is bound by residues valine 15, aspartate 37, lysine 42, tyrosine 68, and 82-83 (GL). Substrate is bound by residues glutamine 85, arginine 91, and 123 to 126 (NPVD). Residues 121-123 (ASN) and threonine 146 each bind NAD(+). A substrate-binding site is contributed by 151–154 (DTSR). Beta-D-fructose 1,6-bisphosphate is bound by residues arginine 156 and histidine 171. Catalysis depends on histidine 178, which acts as the Proton acceptor. Phosphotyrosine is present on tyrosine 222. Threonine 231 serves as a coordination point for substrate.

Belongs to the LDH/MDH superfamily. LDH family. In terms of assembly, homotetramer.

It localises to the cytoplasm. It carries out the reaction (S)-lactate + NAD(+) = pyruvate + NADH + H(+). Its pathway is fermentation; pyruvate fermentation to lactate; (S)-lactate from pyruvate: step 1/1. Allosterically activated by fructose 1,6-bisphosphate (FBP). Its function is as follows. Catalyzes the conversion of lactate to pyruvate. The protein is L-lactate dehydrogenase of Borreliella burgdorferi (strain ATCC 35210 / DSM 4680 / CIP 102532 / B31) (Borrelia burgdorferi).